A 205-amino-acid polypeptide reads, in one-letter code: Small ribosomal subunit protein uS4 (205 aa).

A compositionally biased stretch (basic residues) spans Met1–Asp12. The interval Met1–Gly49 is disordered. The S4 RNA-binding domain maps to Arg94–Ala156.

This sequence belongs to the universal ribosomal protein uS4 family. As to quaternary structure, part of the 30S ribosomal subunit. Contacts protein S5. The interaction surface between S4 and S5 is involved in control of translational fidelity.

In terms of biological role, one of the primary rRNA binding proteins, it binds directly to 16S rRNA where it nucleates assembly of the body of the 30S subunit. Its function is as follows. With S5 and S12 plays an important role in translational accuracy. In Methylobacterium nodulans (strain LMG 21967 / CNCM I-2342 / ORS 2060), this protein is Small ribosomal subunit protein uS4.